The following is a 262-amino-acid chain: Abhydrolase domain-containing protein ACTT2-2 (262 aa).

A Peroxisomal targeting signal type 1 motif is present at residues 260–262 (SKL).

This sequence belongs to the AB hydrolase superfamily. AKT2 hydrolase family.

It localises to the peroxisome. It functions in the pathway mycotoxin biosynthesis. In terms of biological role, abhydrolase domain-containing protein; part of the gene clusters that mediate the biosynthesis of the host-selective toxins (HSTs) ACT-toxins responsible for brown spot of tangerine disease by the tangerine pathotype which affects tangerines and mandarins. ACT-toxins consist of three moieties, 9,10-epoxy-8-hydroxy-9-methyl-decatrienoic acid (EDA), valine and a polyketide. ACT-toxin I is toxic to both citrus and pear; toxin II the 5''-deoxy derivative of ACT-toxin I, is highly toxic to pear and slightly toxic to citrus. On cellular level, ACT-toxins affect plasma membrane of susceptible cells and cause a sudden increase in loss of K(+) after a few minutes of toxin treatment. The acyl-CoA ligase ACTT1, the hydrolase ACTT2, the enoyl-CoA hydratases ACTT3 and ACTT6, and the acyl-CoA synthetase ACTT5 are all involved in the biosynthesis of the AK-, AF- and ACT-toxin common 9,10-epoxy-8-hydroxy-9-methyl-decatrienoic acid (EDA) structural moiety. The exact role of each enzyme, and of additional enzymes identified within the AF-toxin clusters have still to be determined. On the other hand, ACTTS1 to ACTTS4 are specific to the tangerine pathotype. The function of ACTTS3 is to elongate the polyketide chain portion of ACT-toxin that is unique to this toxin. The enoyl-reductase ACTTS2 might complement the missing enoyl-reductase (ER) domain in ACTTS3 in the synthesis of the polyketide portion of ACT-toxin. The roles of the nonribosomal peptide synthetases-related proteins ACTTS1 and ACTTS4 have also still not been elucidated. This Alternaria alternata (Alternaria rot fungus) protein is Abhydrolase domain-containing protein ACTT2-2 (ACTT2-2).